Here is a 406-residue protein sequence, read N- to C-terminus: NAC transcription factor NAM-1 (406 aa).

The segment covering 1–11 has biased composition (polar residues); that stretch reads MGSPDSSSGSA. Residues 1-40 are disordered; it reads MGSPDSSSGSAQKPPRHQHQHQPPPPRRQGSAPELPPGFR. Residues 35–204 enclose the NAC domain; sequence LPPGFRFHPT…DWVLCRIYKK (170 aa). Residues 137–210 mediate DNA binding; it reads VGVKKALVFY…IYKKTSKAAA (74 aa).

The protein resides in the nucleus. Its function is as follows. Transcription factor of the NAC family associated with the grain protein content (GPC). Accelerates senescence and increases nutrient remobilization from leaves to developing grains. Sequences of 11 European varieties of H.vulgare tested belongs to the same haplotype while the sequence found in H.spontaneum, an ancestor of the cultivated H.vulgare which has a higher GPC, belongs to an other haplotype. The sequence is that of NAC transcription factor NAM-1 (NAM-1) from Hordeum vulgare subsp. vulgare (Domesticated barley).